Here is a 265-residue protein sequence, read N- to C-terminus: Shikimate dehydrogenase (NADP(+)) (265 aa).

Residues 14–16 and threonine 61 each bind shikimate; that span reads SLS. Lysine 65 serves as the catalytic Proton acceptor. Shikimate-binding residues include asparagine 85 and aspartate 100. Residues 123 to 127, 146 to 151, and alanine 209 contribute to the NADP(+) site; these read GAGGA and NRTESK. Position 211 (tyrosine 211) interacts with shikimate. Residue glycine 232 participates in NADP(+) binding.

The protein belongs to the shikimate dehydrogenase family. As to quaternary structure, homodimer.

The enzyme catalyses shikimate + NADP(+) = 3-dehydroshikimate + NADPH + H(+). It functions in the pathway metabolic intermediate biosynthesis; chorismate biosynthesis; chorismate from D-erythrose 4-phosphate and phosphoenolpyruvate: step 4/7. Its function is as follows. Involved in the biosynthesis of the chorismate, which leads to the biosynthesis of aromatic amino acids. Catalyzes the reversible NADPH linked reduction of 3-dehydroshikimate (DHSA) to yield shikimate (SA). This chain is Shikimate dehydrogenase (NADP(+)), found in Haloarcula marismortui (strain ATCC 43049 / DSM 3752 / JCM 8966 / VKM B-1809) (Halobacterium marismortui).